Reading from the N-terminus, the 742-residue chain is Photosystem I P700 chlorophyll a apoprotein A2 2 (742 aa).

Transmembrane regions (helical) follow at residues 46–69, 135–158, 175–199, 273–291, 334–357, 373–399, 421–443, and 524–542; these read IFAT…FHVA, LYQG…LHLQ, LNHH…HVAI, MAHH…GHMY, LHFQ…QHMY, AALY…IFWV, AIIS…LYVH, and FLVH…LICV. Residues cysteine 566 and cysteine 575 each contribute to the [4Fe-4S] cluster site. 2 helical membrane passes run 583 to 604 and 651 to 673; these read SFYL…YWHW and LSVW…MFLI. 3 residues coordinate chlorophyll a: histidine 662, methionine 670, and tyrosine 678. Residue tryptophan 679 participates in phylloquinone binding. A helical transmembrane segment spans residues 715-735; it reads LVGLAHFTVGYILTYAAFLIA.

This sequence belongs to the PsaA/PsaB family. In terms of assembly, the PsaA/B heterodimer binds the P700 chlorophyll special pair and subsequent electron acceptors. PSI consists of a core antenna complex that captures photons, and an electron transfer chain that converts photonic excitation into a charge separation. The cyanobacterial PSI reaction center is composed of one copy each of PsaA,B,C,D,E,F,I,J,K,L,M and X, and forms trimeric complexes. It depends on PSI electron transfer chain: 5 chlorophyll a, 1 chlorophyll a', 2 phylloquinones and 3 4Fe-4S clusters. PSI core antenna: 90 chlorophyll a, 22 carotenoids, 3 phospholipids and 1 galactolipid. P700 is a chlorophyll a/chlorophyll a' dimer, A0 is one or more chlorophyll a, A1 is one or both phylloquinones and FX is a shared 4Fe-4S iron-sulfur center. as a cofactor.

It localises to the cellular thylakoid membrane. It carries out the reaction reduced [plastocyanin] + hnu + oxidized [2Fe-2S]-[ferredoxin] = oxidized [plastocyanin] + reduced [2Fe-2S]-[ferredoxin]. Functionally, psaA and PsaB bind P700, the primary electron donor of photosystem I (PSI), as well as the electron acceptors A0, A1 and FX. PSI is a plastocyanin/cytochrome c6-ferredoxin oxidoreductase, converting photonic excitation into a charge separation, which transfers an electron from the donor P700 chlorophyll pair to the spectroscopically characterized acceptors A0, A1, FX, FA and FB in turn. Oxidized P700 is reduced on the lumenal side of the thylakoid membrane by plastocyanin or cytochrome c6. In Trichormus variabilis (strain ATCC 29413 / PCC 7937) (Anabaena variabilis), this protein is Photosystem I P700 chlorophyll a apoprotein A2 2.